A 123-amino-acid polypeptide reads, in one-letter code: Small ribosomal subunit protein uS12 (123 aa).

Residues 1 to 28 (MPTIQQLIRKPRQPKVKRSKSQHLESCP) form a disordered region. Over residues 9–21 (RKPRQPKVKRSKS) the composition is skewed to basic residues. A 3-methylthioaspartic acid modification is found at Asp-89.

This sequence belongs to the universal ribosomal protein uS12 family. Part of the 30S ribosomal subunit. Contacts proteins S8 and S17. May interact with IF1 in the 30S initiation complex.

With S4 and S5 plays an important role in translational accuracy. In terms of biological role, interacts with and stabilizes bases of the 16S rRNA that are involved in tRNA selection in the A site and with the mRNA backbone. Located at the interface of the 30S and 50S subunits, it traverses the body of the 30S subunit contacting proteins on the other side and probably holding the rRNA structure together. The combined cluster of proteins S8, S12 and S17 appears to hold together the shoulder and platform of the 30S subunit. The chain is Small ribosomal subunit protein uS12 from Dinoroseobacter shibae (strain DSM 16493 / NCIMB 14021 / DFL 12).